The sequence spans 384 residues: Galactokinase (384 aa).

34–37 (EHTD) is a binding site for substrate. 123-129 (SSGLSSS) provides a ligand contact to ATP. Mg(2+) is bound by residues serine 129 and glutamate 161. Aspartate 173 functions as the Proton acceptor in the catalytic mechanism. Residue tyrosine 222 participates in substrate binding.

This sequence belongs to the GHMP kinase family. GalK subfamily.

The protein resides in the cytoplasm. The enzyme catalyses alpha-D-galactose + ATP = alpha-D-galactose 1-phosphate + ADP + H(+). Its pathway is carbohydrate metabolism; galactose metabolism. Catalyzes the transfer of the gamma-phosphate of ATP to D-galactose to form alpha-D-galactose-1-phosphate (Gal-1-P). This is Galactokinase from Actinobacillus pleuropneumoniae (Haemophilus pleuropneumoniae).